The primary structure comprises 284 residues: uncharacterized protein (284 aa).

It belongs to the AtsA family.

This is an uncharacterized protein from Mycobacterium leprae (strain TN).